Here is a 189-residue protein sequence, read N- to C-terminus: dCTP deaminase (189 aa).

Residues 112-117 (KSTYAR), 136-138 (TLE), glutamine 157, tyrosine 171, and glutamine 181 each bind dCTP. The active-site Proton donor/acceptor is glutamate 138.

It belongs to the dCTP deaminase family. As to quaternary structure, homotrimer.

It carries out the reaction dCTP + H2O + H(+) = dUTP + NH4(+). It participates in pyrimidine metabolism; dUMP biosynthesis; dUMP from dCTP (dUTP route): step 1/2. Its function is as follows. Catalyzes the deamination of dCTP to dUTP. This is dCTP deaminase from Paraburkholderia xenovorans (strain LB400).